The primary structure comprises 226 residues: uncharacterized protein (226 aa).

A helical transmembrane segment spans residues 203–225 (FGISDIYTSTLSFGLIISLFYLL).

It localises to the membrane. This is an uncharacterized protein from Acanthamoeba polyphaga (Amoeba).